A 119-amino-acid polypeptide reads, in one-letter code: Protein BEX4 (119 aa).

The interval 1 to 53 (MESKEELAANNLNGENAQQENEGREQAPTQNEETRHLGGGEGQKPGGNIRRGR) is disordered. Residues 8 to 20 (AANNLNGENAQQE) show a composition bias toward low complexity. The interaction with SIRT2 stretch occupies residues 31-89 (NEETRHLGGGEGQKPGGNIRRGRVRRLVPNFRWAIPNRHIEHNEARDDVERFVGQMMEI). The interaction with alpha-tubulin stretch occupies residues 31 to 119 (NEETRHLGGG…DNHYDFCLIP (89 aa)). Cys116 is a Zn(2+) binding site.

The protein belongs to the BEX family. Interacts with alpha-tubulin. Interacts with SIRT2. Ubiquitinated and degraded by the proteasome.

Its subcellular location is the cytoplasm. The protein localises to the cytoskeleton. It localises to the spindle pole. The protein resides in the nucleus. Its function is as follows. May play a role in microtubule deacetylation by negatively regulating the SIRT2 deacetylase activity toward alpha-tubulin and thereby participate in the control of cell cycle progression and genomic stability. In absence of reductive stress, acts as a pseudosubstrate for the CRL2(FEM1B) complex: associates with FEM1B via zinc, thereby preventing association between FEM1B and its substrates. The chain is Protein BEX4 from Pongo abelii (Sumatran orangutan).